We begin with the raw amino-acid sequence, 207 residues long: LexA repressor (207 aa).

Positions 28–48 (RAEIARELGFRSANAAEEHLK) form a DNA-binding region, H-T-H motif. Active-site for autocatalytic cleavage activity residues include Ser-124 and Lys-161.

This sequence belongs to the peptidase S24 family. Homodimer.

It carries out the reaction Hydrolysis of Ala-|-Gly bond in repressor LexA.. Represses a number of genes involved in the response to DNA damage (SOS response), including recA and lexA. In the presence of single-stranded DNA, RecA interacts with LexA causing an autocatalytic cleavage which disrupts the DNA-binding part of LexA, leading to derepression of the SOS regulon and eventually DNA repair. This is LexA repressor from Vibrio vulnificus (strain CMCP6).